The primary structure comprises 98 residues: NADH-ubiquinone oxidoreductase chain 4L (98 aa).

A run of 3 helical transmembrane segments spans residues 1–21 (MMSI…GVLI), 28–48 (STLL…ALLI), and 59–79 (APLI…ALLV).

The protein belongs to the complex I subunit 4L family. As to quaternary structure, core subunit of respiratory chain NADH dehydrogenase (Complex I) which is composed of 45 different subunits.

Its subcellular location is the mitochondrion inner membrane. The catalysed reaction is a ubiquinone + NADH + 5 H(+)(in) = a ubiquinol + NAD(+) + 4 H(+)(out). Functionally, core subunit of the mitochondrial membrane respiratory chain NADH dehydrogenase (Complex I) which catalyzes electron transfer from NADH through the respiratory chain, using ubiquinone as an electron acceptor. Part of the enzyme membrane arm which is embedded in the lipid bilayer and involved in proton translocation. The polypeptide is NADH-ubiquinone oxidoreductase chain 4L (MT-ND4L) (Lagorchestes hirsutus (Rufous hare-wallaby)).